Consider the following 322-residue polypeptide: Solute carrier family 35 member B1 (322 aa).

The next 8 membrane-spanning stretches (helical) occupy residues 12–32 (LRLPLCFLGVFVCYFYYGILQ), 51–71 (FALTLVFIQCVVNAVFAKILI), 85–105 (WLYAACSVSYLGAMVSSNSAL), 136–156 (YPMAKYLCVLLIVAGVALFMY), 168–188 (TIGYGELLLLLSLTLDGLTGV), 210–230 (LWSTLLLGAGILFTGELWEFL), 243–263 (ILLFGLTSALGQSFIFMTVVY), and 285–305 (VILFANPISPMQWVGTVLVFL). A Di-lysine motif motif is present at residues 318–322 (KKTSH).

The protein belongs to the nucleotide-sugar transporter family. SLC35B subfamily.

The protein resides in the endoplasmic reticulum membrane. The enzyme catalyses ADP(in) + ATP(out) = ADP(out) + ATP(in). It carries out the reaction UDP(out) + ATP(in) = UDP(in) + ATP(out). It catalyses the reaction UTP(out) + ATP(in) = UTP(in) + ATP(out). The catalysed reaction is dATP(out) + ATP(in) = dATP(in) + ATP(out). Functionally, ATP:ADP antiporter that catalyzes the exchange of ATP and ADP across the endoplasmic reticulum (ER) membrane. Imports ATP from the cytosol to the ER lumen and exports ADP in the opposite direction. Regulates ER energy metabolism and protein biogenesis. Appears to be part of a calcium-dependent ER to cytosol low energy response axis, where calcium efflux from ER to the cytosol triggers ATP import into the ER lumen to maintain sufficient ATP supply. Provides ATP to ER chaperone HSPA5 that drives protein folding and trafficking in the ER. Can transport dATP, UTP or UDP in exchange for ATP, but the physiological relevance of this process remains to be established. The chain is Solute carrier family 35 member B1 (SLC35B1) from Bos taurus (Bovine).